We begin with the raw amino-acid sequence, 787 residues long: Protein translocase subunit SecA (787 aa).

ATP-binding positions include Gln85, 103–107 (GEGKT), and Asp492.

Belongs to the SecA family. In terms of assembly, monomer and homodimer. Part of the essential Sec protein translocation apparatus which comprises SecA, SecYEG and auxiliary proteins SecDF. Other proteins may also be involved.

The protein resides in the cell membrane. Its subcellular location is the cytoplasm. The enzyme catalyses ATP + H2O + cellular proteinSide 1 = ADP + phosphate + cellular proteinSide 2.. In terms of biological role, part of the Sec protein translocase complex. Interacts with the SecYEG preprotein conducting channel. Has a central role in coupling the hydrolysis of ATP to the transfer of proteins into and across the cell membrane, serving as an ATP-driven molecular motor driving the stepwise translocation of polypeptide chains across the membrane. The polypeptide is Protein translocase subunit SecA (Lactiplantibacillus plantarum (strain ATCC BAA-793 / NCIMB 8826 / WCFS1) (Lactobacillus plantarum)).